The primary structure comprises 322 residues: Ig gamma-2A chain C region (322 aa).

3 consecutive Ig-like domains span residues 6-98, 115-212, and 221-317; these read PSVY…KKIV, VFIF…KSIS, and PQVY…KSLS. Intrachain disulfides connect Cys27/Cys82, Cys136/Cys196, and Cys242/Cys300. Asn172 carries N-linked (GlcNAc...) asparagine glycosylation.

The chain is Ig gamma-2A chain C region (Igg-2a) from Rattus norvegicus (Rat).